A 434-amino-acid chain; its full sequence is Alpha-enolase (434 aa).

Serine 2 carries the post-translational modification N-acetylserine. Lysine 5 carries the N6-acetyllysine modification. Serine 27 carries the post-translational modification Phosphoserine. The epitope recognized by CAR and healthy patient antibodies stretch occupies residues 31-38 (FRAAVPSG). Mg(2+) is bound at residue serine 40. Residue tyrosine 44 is modified to Phosphotyrosine. The epitope recognized by CAR antibodies stretch occupies residues 56-63 (RYMGKGVS). N6-acetyllysine; alternate is present on lysine 60. Position 60 is an N6-succinyllysine; alternate (lysine 60). N6-acetyllysine is present on residues lysine 64 and lysine 71. Lysine 89 is subject to N6-acetyllysine; alternate. Residue lysine 89 is modified to N6-succinyllysine; alternate. Residues lysine 92 and lysine 126 each carry the N6-acetyllysine modification. Residues 97 to 237 (MDGTENKSKF…KTAIGKAGYT (141 aa)) are required for repression of c-myc promoter activity. Histidine 158 and glutamate 167 together coordinate substrate. Lysine 193 and lysine 199 each carry N6-acetyllysine. Residue lysine 202 is modified to N6-acetyllysine; alternate. Lysine 202 participates in a covalent cross-link: Glycyl lysine isopeptide (Lys-Gly) (interchain with G-Cter in SUMO2); alternate. Residue glutamate 210 is the Proton donor of the active site. 2 positions are modified to N6-acetyllysine; alternate: lysine 228 and lysine 233. At lysine 228 the chain carries N6-succinyllysine; alternate. Lysine 228 is subject to N6-(2-hydroxyisobutyryl)lysine; alternate. N6-malonyllysine; alternate is present on lysine 233. Aspartate 245 contacts Mg(2+). A Phosphoserine modification is found at serine 254. Lysine 256 carries the post-translational modification N6-acetyllysine. A phosphoserine mark is found at serine 263 and serine 272. Residue lysine 281 is modified to N6-acetyllysine; alternate. Residue lysine 281 is modified to N6-(2-hydroxyisobutyryl)lysine; alternate. Lysine 285 carries the N6-acetyllysine modification. Tyrosine 287 is subject to Phosphotyrosine. At serine 291 the chain carries Phosphoserine. 2 residues coordinate Mg(2+): glutamate 293 and aspartate 318. Residues glutamate 293 and aspartate 318 each contribute to the substrate site. Lysine 335 and lysine 343 each carry N6-acetyllysine. Lysine 343 acts as the Proton acceptor in catalysis. Residues 370-373 (SHRS) and lysine 394 each bind substrate. The segment at 405 to 434 (AKYNQLLRIEEELGSKAKFAGRNFRNPLAK) is required for interaction with PLG. N6-acetyllysine is present on lysine 406. Lysine 420 is subject to N6-acetyllysine; alternate. N6-succinyllysine; alternate is present on lysine 420. Position 420 is an N6-malonyllysine; alternate (lysine 420).

Belongs to the enolase family. As to quaternary structure, mammalian enolase is composed of 3 isozyme subunits, alpha, beta and gamma, which can form homodimers or heterodimers which are cell-type and development-specific. ENO1 interacts with PLG in the neuronal plasma membrane and promotes its activation. The C-terminal lysine is required for this binding. Isoform MBP-1 interacts with TRAPPC2B. Interacts with ENO4 and PGAM2. Interacts with CMTM6. Requires Mg(2+) as cofactor. ISGylated. In terms of processing, lysine 2-hydroxyisobutyrylation (Khib) by p300/EP300 activates the phosphopyruvate hydratase activity. In terms of tissue distribution, the alpha/alpha homodimer is expressed in embryo and in most adult tissues. The alpha/beta heterodimer and the beta/beta homodimer are found in striated muscle, and the alpha/gamma heterodimer and the gamma/gamma homodimer in neurons.

The protein localises to the cytoplasm. The protein resides in the cell membrane. Its subcellular location is the myofibril. It is found in the sarcomere. It localises to the m line. The protein localises to the nucleus. It catalyses the reaction (2R)-2-phosphoglycerate = phosphoenolpyruvate + H2O. It participates in carbohydrate degradation; glycolysis; pyruvate from D-glyceraldehyde 3-phosphate: step 4/5. Its function is as follows. Glycolytic enzyme the catalyzes the conversion of 2-phosphoglycerate to phosphoenolpyruvate. In addition to glycolysis, involved in various processes such as growth control, hypoxia tolerance and allergic responses. May also function in the intravascular and pericellular fibrinolytic system due to its ability to serve as a receptor and activator of plasminogen on the cell surface of several cell-types such as leukocytes and neurons. Stimulates immunoglobulin production. Functionally, binds to the myc promoter and acts as a transcriptional repressor. May be a tumor suppressor. This Homo sapiens (Human) protein is Alpha-enolase (ENO1).